A 472-amino-acid polypeptide reads, in one-letter code: uncharacterized protein (472 aa).

Transmembrane regions (helical) follow at residues 14–34, 53–73, 80–100, 113–133, 142–162, 169–189, 202–222, 227–247, 263–283, 302–322, 333–353, 359–379, 405–427, and 437–457; these read VIVG…TLLI, WLTT…AFLI, ALLI…AFAP, AAGA…IFPI, MVGL…GWAV, SLFY…SILM, ILSV…FSSV, WSSS…LLFI, FTFG…ALLI, FDTG…SPII, GLAI…MQLT, AWIV…MMPV, VGGS…HAGT, and GMNA…LLSF.

This sequence belongs to the major facilitator superfamily. EmrB family.

The protein localises to the cell membrane. This is an uncharacterized protein from Bacillus subtilis (strain 168).